The sequence spans 182 residues: MHFVAVYILTHFHAYPGVAALPFFSTLPKITSCCDHYVVLNSLSSVSSSTPTCLDGEXLFQNAGQKFCRPFTDNRTIVYTMQDQVQRPWSVTWMDFNLVISDYGRAVIENLTESAMSAHKNGPRYLQMETFISDLFRYECHRDNRYVLEKKLQMFYPTTHMNELLFYPSDPTLPSPYGNGHY.

An N-terminal signal peptide occupies residues 1 to 20 (MHFVAVYILTHFHAYPGVAA). N74 and N110 each carry an N-linked (GlcNAc...) asparagine; by host glycan.

Interacts with isoform gQ2. The heterodimer gQ1-gQ2 associates with the glycoprotein complex gH-gL to form a tetrameric complex. The gH/gL/gQ1/gQ2 complex binds to host TNFRSF4. Post-translationally, glycosylated by host.

The protein localises to the virion membrane. It localises to the host endoplasmic reticulum-Golgi intermediate compartment. Plays a role in virus entry by participating in host receptor binding at the cell surface. The polypeptide is Glycoprotein Q2 (Human herpesvirus 6B (strain Z29) (HHV-6 variant B)).